Consider the following 487-residue polypeptide: Malonate-semialdehyde dehydrogenase (487 aa).

Positions 150, 152, 176, 179, 180, 229, and 251 each coordinate NAD(+). Residue Cys-284 is the Nucleophile of the active site. An NAD(+)-binding site is contributed by Glu-382.

The protein belongs to the aldehyde dehydrogenase family. IolA subfamily. Homotetramer.

The catalysed reaction is 3-oxopropanoate + NAD(+) + CoA + H2O = hydrogencarbonate + acetyl-CoA + NADH + H(+). It catalyses the reaction 2-methyl-3-oxopropanoate + NAD(+) + CoA + H2O = propanoyl-CoA + hydrogencarbonate + NADH + H(+). The protein operates within polyol metabolism; myo-inositol degradation into acetyl-CoA; acetyl-CoA from myo-inositol: step 7/7. Catalyzes the oxidation of malonate semialdehyde (MSA) and methylmalonate semialdehyde (MMSA) into acetyl-CoA and propanoyl-CoA, respectively. Is involved in a myo-inositol catabolic pathway. Bicarbonate, and not CO2, is the end-product of the enzymatic reaction. This chain is Malonate-semialdehyde dehydrogenase, found in Bacillus subtilis subsp. natto.